Consider the following 38-residue polypeptide: L-amino-acid oxidase (38 aa).

This sequence belongs to the flavin monoamine oxidase family. FIG1 subfamily. As to quaternary structure, homodimer; non-covalently linked. Requires FAD as cofactor. N-glycosylated. Expressed by the venom gland.

Its subcellular location is the secreted. The enzyme catalyses an L-alpha-amino acid + O2 + H2O = a 2-oxocarboxylate + H2O2 + NH4(+). It carries out the reaction L-leucine + O2 + H2O = 4-methyl-2-oxopentanoate + H2O2 + NH4(+). It catalyses the reaction L-phenylalanine + O2 + H2O = 3-phenylpyruvate + H2O2 + NH4(+). The catalysed reaction is L-tryptophan + O2 + H2O = indole-3-pyruvate + H2O2 + NH4(+). The enzyme catalyses L-methionine + O2 + H2O = 4-methylsulfanyl-2-oxobutanoate + H2O2 + NH4(+). It carries out the reaction L-arginine + O2 + H2O = 5-guanidino-2-oxopentanoate + H2O2 + NH4(+). It catalyses the reaction L-2-aminohexanoate + O2 + H2O = 2-oxohexanoate + H2O2 + NH4(+). The catalysed reaction is L-2-aminopentanoate + O2 + H2O = 2-oxopentanoate + H2O2 + NH4(+). The enzyme catalyses L-tyrosine + O2 + H2O = 3-(4-hydroxyphenyl)pyruvate + H2O2 + NH4(+). Functionally, catalyzes an oxidative deamination of predominantly hydrophobic and aromatic L-amino acids, thus producing hydrogen peroxide that may contribute to the diverse toxic effects of this enzyme. Is very active against L-Phe and L-Tyr, moderately active against L-Trp, L-Met, L-Leu, L-norleucine (L-2-aminohexanoate), L-Arg and L-norvaline (L-2-aminopentanoate), and slightly active against L-His, L-cystine, and L-Ile. L-Gln, L-Lys, L-Asn, L-ornithine, L-Ala and L-Val are oxidized very slowly. Exhibits diverse biological activities, such as hemorrhage, hemolysis, edema, apoptosis of vascular endothelial cells or tumor cell lines, antibacterial and antiparasitic activities. This protein inhibits both agonist- and shear stress-induced platelet aggregation (SIPA). Effects of snake L-amino oxidases on platelets are controversial, since they either induce aggregation or inhibit agonist-induced aggregation. These different effects are probably due to different experimental conditions. In Naja kaouthia (Monocled cobra), this protein is L-amino-acid oxidase.